The sequence spans 528 residues: MSQPSSDTQRQPAIVILDFGSQYSELIARRVRETEVFSVVLGYSTSAEELRRMAPKGIILSGGPSSVYAEHAPLCDPGIWDLGIPVLGVCYGMQLMVQQLGGVVEAATGKAEYGKAPLEVDDPTDLLTNVDNGSTMWMSHGDSVKALPEGFVRLAHTANTPEAAVAHLQRKLYGVQFHPEVVHSTCGMALIRNFVYHVCGCDPDWTTAAFIDEAVALVREQVGDKRVLLALSGGVDSSTLAFLLKKAIGDQLTCMFIDQGFMRKGEPEFLMDFFDRKFNIHVEYINARQRFIGKLEGITDPEEKRKIIGTEFIRVFEEESKRLGPFDYLAQGTLYPDVIESAGTNVDPKTGERVAVKIKSHHNVGGLPKDLQFKLVEPLRKLFKDEVRKVGRSLGLPEEIVRRHPFPGPGLAIRILGEVTDEKLDCLRDADLIVRQEIKEAGLYHDIWQAFAVLLPVRSVGVMGDKRTYAWPIVLRCVSSEDGMTADWSRLPYDLMETISNRIVNEVKGVNRVVLDITSKPPGTIEWE.

The region spanning 13–204 (AIVILDFGSQ…VYHVCGCDPD (192 aa)) is the Glutamine amidotransferase type-1 domain. Residue C90 is the Nucleophile of the active site. Catalysis depends on residues H178 and E180. In terms of domain architecture, GMPS ATP-PPase spans 205-403 (WTTAAFIDEA…LGLPEEIVRR (199 aa)). 232–238 (SGGVDSS) lines the ATP pocket.

Homodimer.

It catalyses the reaction XMP + L-glutamine + ATP + H2O = GMP + L-glutamate + AMP + diphosphate + 2 H(+). It functions in the pathway purine metabolism; GMP biosynthesis; GMP from XMP (L-Gln route): step 1/1. In terms of biological role, catalyzes the synthesis of GMP from XMP. The sequence is that of GMP synthase [glutamine-hydrolyzing] from Synechococcus sp. (strain CC9605).